We begin with the raw amino-acid sequence, 375 residues long: Chaperone protein DnaJ (375 aa).

Residues aspartate 4–glycine 68 form the J domain. The CR-type zinc-finger motif lies at glycine 134 to threonine 216. Zn(2+)-binding residues include cysteine 147, cysteine 150, cysteine 164, cysteine 167, cysteine 190, cysteine 193, cysteine 204, and cysteine 207. CXXCXGXG motif repeat units lie at residues cysteine 147 to glycine 154, cysteine 164 to glycine 171, cysteine 190 to glycine 197, and cysteine 204 to glycine 211.

It belongs to the DnaJ family. As to quaternary structure, homodimer. Zn(2+) serves as cofactor.

It localises to the cytoplasm. Participates actively in the response to hyperosmotic and heat shock by preventing the aggregation of stress-denatured proteins and by disaggregating proteins, also in an autonomous, DnaK-independent fashion. Unfolded proteins bind initially to DnaJ; upon interaction with the DnaJ-bound protein, DnaK hydrolyzes its bound ATP, resulting in the formation of a stable complex. GrpE releases ADP from DnaK; ATP binding to DnaK triggers the release of the substrate protein, thus completing the reaction cycle. Several rounds of ATP-dependent interactions between DnaJ, DnaK and GrpE are required for fully efficient folding. Also involved, together with DnaK and GrpE, in the DNA replication of plasmids through activation of initiation proteins. In Rippkaea orientalis (strain PCC 8801 / RF-1) (Cyanothece sp. (strain PCC 8801)), this protein is Chaperone protein DnaJ.